The chain runs to 357 residues: MSALGESNNKQNGKEILHNYVTKKLTSQPYSCQWIPTSCSVVTVGKKTSGGISKGDIKIHQLEFDDTSGDPKLNLVYENEFTNPFRCLSFFKQANQLQQQDNRKFITGDFNGQISEWDSDICDIPIWGVKGAHQGSISAIDAYADNLVVCGGKDGTIKVYDTRIKPNSANDNNGNNSSPISTFEQTNKSNCWSICTNDNNIIAGFENGDLNIYNLKTNSIQSTTKLNGGICSIDSNDRSNILNQFLITTNKSFISIASFNNNNNNNIEFKDYDINKEPNQTIWSGIYSPWNKKDNENIFTIAQGDGSVSMYRDDCKLIDKVLVSDLPILSLDYSKDRKGLLCCISLKKQLSILISPC.

WD repeat units lie at residues Glu-80–Trp-127, Ala-132–Asn-170, Glu-184–Thr-223, and Glu-277–Val-321.

As to quaternary structure, interacts with PIH1D1; the interaction associates DNAAF10 with the R2TP complex. Interacts with several dynein axonemal assembly factors.

It is found in the dynein axonemal particle. Its function is as follows. Key assembly factor specifically required for the stability of axonemal dynein heavy chains in cytoplasm. This is Dynein axonemal assembly factor 10 (dnaaf10) from Dictyostelium discoideum (Social amoeba).